Here is a 503-residue protein sequence, read N- to C-terminus: GMP synthase [glutamine-hydrolyzing] (503 aa).

The region spanning 3-189 (PVLVVDFGSQ…AFLSSFAAPN (187 aa)) is the Glutamine amidotransferase type-1 domain. Cysteine 80 functions as the Nucleophile in the catalytic mechanism. Active-site residues include histidine 165 and glutamate 167. A GMPS ATP-PPase domain is found at 190–380 (WDPEQTICGT…LGIPKHIVHR (191 aa)). An ATP-binding site is contributed by 217–223 (SGGVDSV).

As to quaternary structure, homodimer.

The enzyme catalyses XMP + L-glutamine + ATP + H2O = GMP + L-glutamate + AMP + diphosphate + 2 H(+). It participates in purine metabolism; GMP biosynthesis; GMP from XMP (L-Gln route): step 1/1. Its function is as follows. Catalyzes the synthesis of GMP from XMP. This chain is GMP synthase [glutamine-hydrolyzing], found in Tropheryma whipplei (strain TW08/27) (Whipple's bacillus).